The chain runs to 541 residues: 3-oxoacyl-[acyl-carrier-protein] synthase II, chloroplastic (541 aa).

Residues 1–103 (MVGASSSYAS…NRNQRRLNRA (103 aa)) constitute a chloroplast transit peptide. A Ketosynthase family 3 (KS3) domain is found at 129-539 (QRRVVVTGMG…GHNSSIIFAP (411 aa)). Active-site for beta-ketoacyl synthase activity residues include cysteine 292, histidine 432, and histidine 468.

The protein belongs to the thiolase-like superfamily. Beta-ketoacyl-ACP synthases family. As to quaternary structure, homodimer. Mostly expressed in siliques, and, to a lower extent, in leaves, stems, flower buds, and flowers.

The protein resides in the plastid. The protein localises to the chloroplast stroma. It catalyses the reaction a fatty acyl-[ACP] + malonyl-[ACP] + H(+) = a 3-oxoacyl-[ACP] + holo-[ACP] + CO2. Functionally, essential protein that catalyzes the condensation reaction of fatty acid synthesis by the addition to an acyl acceptor of two carbons from malonyl-ACP. Specific for elongation from C-16 and C-16 to unsaturated C-18 fatty acids. Confers resistance to low temperatures by maintaining chloroplast membranes integrity. Involved in the regulation of fatty acids ratios during seed metabolism. Required for embryo development, especially at the transition from the globular to the heart stage. This Arabidopsis thaliana (Mouse-ear cress) protein is 3-oxoacyl-[acyl-carrier-protein] synthase II, chloroplastic (KAS2).